A 154-amino-acid chain; its full sequence is Protein X (154 aa).

A mitochondrial targeting sequence region spans residues 68 to 117; it reads PCALRFTSARRMETTVNAHQFLPKVLHKRTLGLSVMSTTDLEAYFKDCLF.

The protein belongs to the orthohepadnavirus protein X family. As to quaternary structure, may form homodimer. May interact with host CEBPA, CFLAR, CREB1, DDB1, E4F1, HBXIP, HSPD1/HSP60, NFKBIA, POLR2E and SMAD4. Interacts with host SMC5-SMC6 complex and induces its degradation. Interacts with host TRPC4AP; leading to prevent ubiquitination of TRPC4AP. Interacts with host PLSCR1; this interaction promotes ubiquitination and degradation of HBx and impairs HBx-mediated cell proliferation. A fraction may be phosphorylated in insect cells and HepG2 cells, a human hepatoblastoma cell line. Phosphorylated in vitro by host protein kinase C or mitogen-activated protein kinase. N-acetylated in insect cells.

Its subcellular location is the host cytoplasm. The protein localises to the host nucleus. It localises to the host mitochondrion. In terms of biological role, multifunctional protein that plays a role in silencing host antiviral defenses and promoting viral transcription. Does not seem to be essential for HBV infection. May be directly involved in development of cirrhosis and liver cancer (hepatocellular carcinoma). Most of cytosolic activities involve modulation of cytosolic calcium. The effect on apoptosis is controversial depending on the cell types in which the studies have been conducted. May induce apoptosis by localizing in mitochondria and causing loss of mitochondrial membrane potential. May also modulate apoptosis by binding host CFLAR, a key regulator of the death-inducing signaling complex (DISC). Promotes viral transcription by using the host E3 ubiquitin ligase DDB1 to target the SMC5-SMC6 complex to proteasomal degradation. This host complex would otherwise bind to viral episomal DNA, and prevents its transcription. Moderately stimulates transcription of many different viral and cellular transcription elements. Promoters and enhancers stimulated by HBx contain DNA binding sites for NF-kappa-B, AP-1, AP-2, c-EBP, ATF/CREB, or the calcium-activated factor NF-AT. In Hepatitis B virus genotype D (isolate France/alpha1/1989) (HBV-D), this protein is Protein X.